We begin with the raw amino-acid sequence, 546 residues long: Alpha-isocomene synthase (546 aa).

Asp-299, Asp-303, Asp-443, and Glu-451 together coordinate Mg(2+). The DDXXD motif motif lies at 299–303 (DDTYD).

The protein belongs to the terpene synthase family. Tpsa subfamily. It depends on Mg(2+) as a cofactor. Requires Mn(2+) as cofactor. As to expression, highly expressed in roots, lower levels in stems and leaves and detected in disk florets, but not in ray florets.

The catalysed reaction is (2E,6E)-farnesyl diphosphate = (-)-alpha-isocomene + diphosphate. Its pathway is secondary metabolite biosynthesis; terpenoid biosynthesis. Functionally, sesquiterpene synthase involved in the biosynthesis of alpha-isocomene as the major product and detectable amounts of beta-caryophyllene, beta-isocomene, silphinene and modeph-2-ene. Produces exclusively the (-)-(E)-beta caryophyllene enantiomer. The sequence is that of Alpha-isocomene synthase from Matricaria chamomilla var. recutita (German chamomile).